The sequence spans 240 residues: Adapter protein MecA (240 aa).

A disordered region spans residues 118–138 (EQRAQQQKHSHKSEQKQTKQR).

Belongs to the MecA family. Homodimer.

Enables the recognition and targeting of unfolded and aggregated proteins to the ClpC protease or to other proteins involved in proteolysis. This chain is Adapter protein MecA, found in Staphylococcus haemolyticus (strain JCSC1435).